Reading from the N-terminus, the 213-residue chain is Glutamine amidotransferase-like class 1 domain-containing protein 1 (213 aa).

The first 20 residues, 1 to 20, serve as a signal peptide directing secretion; sequence MTSKPTCLIVASAASAGVSA.

Belongs to the peptidase C56 family. As to quaternary structure, homotetramer. Component of the FERRY complex.

The protein resides in the secreted. It localises to the early endosome. Component of the FERRY complex (Five-subunit Endosomal Rab5 and RNA/ribosome intermediary). The FERRY complex directly interacts with mRNAs and RAB5A, and functions as a RAB5A effector involved in the localization and the distribution of specific mRNAs most likely by mediating their endosomal transport. The complex recruits mRNAs and ribosomes to early endosomes through direct mRNA-interaction. The polypeptide is Glutamine amidotransferase-like class 1 domain-containing protein 1 (Danio rerio (Zebrafish)).